We begin with the raw amino-acid sequence, 52 residues long: Conotoxin reg3h (52 aa).

Ala1 is a signal peptide. Residues 2–33 constitute a propeptide that is removed on maturation; the sequence is LPLDGDQPADQPAERMQDISPELNPLFHPVKR. Cystine bridges form between Cys35/Cys49, Cys36/Cys47, and Cys41/Cys50. 3 positions are modified to 4-hydroxyproline: Pro38, Pro48, and Pro51. Asparagine amide is present on Asn52.

As to expression, expressed by the venom duct.

It localises to the secreted. In Conus regius (Crown cone), this protein is Conotoxin reg3h.